Here is a 3938-residue protein sequence, read N- to C-terminus: Protein bassoon (3938 aa).

Residues methionine 1–isoleucine 158 are disordered. Glycine 2 is lipidated: N-myristoyl glycine. The segment covering glycine 9–alanine 29 has biased composition (gly residues). Over residues lysine 31–valine 61 the composition is skewed to low complexity. Residues proline 62 to proline 70 form a 4 X 2 AA tandem repeats of P-G region. Composition is skewed to polar residues over residues glutamine 86 to alanine 98 and glutamine 127 to serine 154. A Phosphoserine modification is found at serine 142. Position 145 is an omega-N-methylarginine (arginine 145). C4-type zinc fingers lie at residues cysteine 167–cysteine 190 and cysteine 195–cysteine 217. Disordered stretches follow at residues threonine 228–lysine 346 and leucine 361–proline 456. Residues alanine 230–histidine 240 show a composition bias toward polar residues. A phosphoserine mark is found at serine 241 and serine 245. Over residues leucine 361–proline 376 the composition is skewed to polar residues. Pro residues predominate over residues proline 394 to threonine 406. 2 consecutive C4-type zinc fingers follow at residues cysteine 462 to cysteine 485 and cysteine 490 to cysteine 512. Disordered regions lie at residues glycine 523 to glycine 921, glycine 934 to glycine 1247, methionine 1294 to serine 1541, and arginine 1561 to serine 1611. The segment covering alanine 526–glycine 539 has biased composition (pro residues). The segment covering serine 548–proline 589 has biased composition (low complexity). 3 consecutive repeat copies span residues lysine 568–alanine 574, lysine 575–alanine 581, and lysine 582–lysine 588. Residues lysine 568–lysine 588 are 3 X 7 AA tandem repeats of K-A-S-P-Q-A-[AK]. The segment covering valine 616–threonine 629 has biased composition (pro residues). Residues glutamine 668–leucine 677 show a composition bias toward polar residues. Positions serine 678–serine 692 are enriched in low complexity. Positions glutamate 693–valine 702 are enriched in polar residues. Acidic residues-rich tracts occupy residues phenylalanine 769–serine 784 and serine 847–threonine 858. Arginine 863 is subject to Omega-N-methylarginine. Serine 965 carries the phosphoserine modification. The segment covering proline 979 to serine 996 has biased composition (low complexity). A coiled-coil region spans residues isoleucine 1032–threonine 1087. The segment covering aspartate 1034–leucine 1047 has biased composition (acidic residues). Phosphoserine is present on residues serine 1035 and serine 1036. Basic and acidic residues predominate over residues leucine 1048–arginine 1061. The residue at position 1085 (serine 1085) is a Phosphoserine. Threonine 1087 is modified (phosphothreonine). Phosphoserine occurs at positions 1093 and 1099. Basic and acidic residues predominate over residues glutamate 1102–serine 1117. 2 stretches are compositionally biased toward low complexity: residues cysteine 1118 to aspartate 1128 and serine 1158 to proline 1175. Residues leucine 1176 to alanine 1203 are a coiled coil. Residues lysine 1177–leucine 1192 are compositionally biased toward basic and acidic residues. Residues glutamine 1194–arginine 1204 show a composition bias toward low complexity. Residues serine 1211–tyrosine 1224 are compositionally biased toward polar residues. Serine 1221 is subject to Phosphoserine. Over residues serine 1318–serine 1328 the composition is skewed to low complexity. Threonine 1339 is a glycosylation site (O-linked (GlcNAc) threonine). Residues phenylalanine 1342 to lysine 1351 show a composition bias toward basic and acidic residues. Composition is skewed to low complexity over residues leucine 1352–lysine 1364 and proline 1374–proline 1386. A glycan (O-linked (GlcNAc) threonine) is linked at threonine 1380. A compositionally biased stretch (polar residues) spans serine 1402–glutamate 1426. Serine 1470, serine 1479, and serine 1481 each carry phosphoserine. Positions serine 1476–serine 1487 are enriched in low complexity. Composition is skewed to polar residues over residues glutamate 1496–isoleucine 1510 and arginine 1561–proline 1597. Omega-N-methylarginine occurs at positions 1780 and 1784. An Asymmetric dimethylarginine; alternate modification is found at arginine 1794. Omega-N-methylarginine; alternate is present on arginine 1794. Arginine 1806 carries the omega-N-methylarginine modification. Positions proline 1914–proline 1964 are disordered. The O-linked (GlcNAc) threonine glycan is linked to threonine 1922. Residues serine 1978 and serine 2034 each carry the phosphoserine modification. Arginine 2039 and arginine 2069 each carry omega-N-methylarginine. Arginine 2243, arginine 2253, and arginine 2259 each carry asymmetric dimethylarginine. The disordered stretch occupies residues alanine 2280–serine 2305. An O-linked (GlcNAc) threonine glycan is attached at threonine 2307. Disordered regions lie at residues valine 2318–leucine 2343 and glutamate 2461–alanine 2486. Residues arginine 2345–proline 2470 are a coiled coil. Threonine 2510 is a glycosylation site (O-linked (GlcNAc) threonine). A disordered region spans residues proline 2513 to alanine 2648. A compositionally biased stretch (polar residues) spans serine 2527–glutamate 2537. At serine 2564 the chain carries Phosphoserine. 2 positions are modified to phosphothreonine: threonine 2581 and threonine 2608. The segment covering arginine 2629–alanine 2641 has biased composition (basic and acidic residues). O-linked (GlcNAc) threonine glycosylation occurs at threonine 2685. Positions glutamate 2715 to aspartate 3263 are interaction with DAO. Residues serine 2796, serine 2845, and serine 2851 each carry the phosphoserine modification. A disordered region spans residues threonine 2839–lysine 2859. The O-linked (GlcNAc) threonine glycan is linked to threonine 2930. Residues serine 2933–leucine 2975 are a coiled coil. The segment at leucine 2934–leucine 2996 is sufficient for binding to ERC2. Serine 3007 is subject to Phosphoserine. Positions threonine 3055 to glycine 3068 are enriched in polar residues. Disordered stretches follow at residues threonine 3055–glutamate 3148, alanine 3162–phenylalanine 3399, glutamine 3414–histidine 3546, and tyrosine 3569–lysine 3910. Basic and acidic residues predominate over residues glutamate 3184 to aspartate 3196. A compositionally biased stretch (polar residues) spans serine 3198–proline 3222. Residue serine 3286 is modified to Phosphoserine. Over residues glutamate 3304–tyrosine 3315 the composition is skewed to polar residues. 3 stretches are compositionally biased toward basic and acidic residues: residues serine 3316–lysine 3328, glutamine 3358–glutamate 3377, and leucine 3450–alanine 3469. Serine 3368 bears the Phosphoserine mark. Arginine 3488 is modified (omega-N-methylarginine). Residues proline 3506–glycine 3520 are compositionally biased toward low complexity. Basic and acidic residues-rich tracts occupy residues valine 3535–histidine 3546 and tryptophan 3578–aspartate 3588. Residues glutamate 3638–arginine 3651 show a composition bias toward basic residues. Residues histidine 3652–proline 3676 are compositionally biased toward basic and acidic residues. A compositionally biased stretch (low complexity) spans proline 3751–threonine 3820. Residues glutamine 3772–alanine 3803 adopt a coiled-coil conformation. Position 3822 is an omega-N-methylarginine (arginine 3822). Residues lysine 3834–alanine 3848 show a composition bias toward pro residues. 2 stretches are compositionally biased toward low complexity: residues lysine 3860–alanine 3887 and glycine 3894–glycine 3904.

Interacts with PCLO, ERC2/CAST1, RIMS1 and UNC13A. Interacts with TPRG1L. Interacts with DYNLL1 and DYNLL2; these interactions potentially link PTVs to dynein and myosin V motor complexes. Interacts with ATG5; this interaction is important for the regulation of presynaptic autophagy. Interacts (via C-terminus) with TRIO (via N-terminus). Interacts with CTBP1. Interacts with SIAH1; this interaction negatively regulates SIAH1 E3 ligase activity. Interacts (via coiled region) with DAO; the interaction is direct. Post-translationally, myristoylated. The N-terminal myristoylation is not sufficient for presynaptic localization. Detected at synapses in the stratum lucidum in the hippocampus CA3 region (at protein level).

It localises to the cytoplasm. The protein localises to the presynaptic active zone. Its subcellular location is the cytoskeleton. It is found in the cytoplasmic vesicle. The protein resides in the secretory vesicle. It localises to the synaptic vesicle membrane. Its function is as follows. Scaffold protein of the presynaptic cytomatrix at the active zone (CAZ) which is the place in the synapse where neurotransmitter is released. After synthesis, participates in the formation of Golgi-derived membranous organelles termed Piccolo-Bassoon transport vesicles (PTVs) that are transported along axons to sites of nascent synaptic contacts. At the presynaptic active zone, regulates the spatial organization of synaptic vesicle cluster, the protein complexes that execute membrane fusion and compensatory endocytosis. Also functions in processes other than assembly such as the regulation of specific presynaptic protein ubiquitination by interacting with SIAH1 or the regulation of presynaptic autophagy by associating with ATG5. Also mediates synapse to nucleus communication leading to reconfiguration of gene expression by associating with the transcriptional corepressor CTBP1 and by subsequently reducing the size of its pool available for nuclear import. Inhibits the activity of the proportion of DAO enzyme that localizes to the presynaptic active zone, which may modulate synaptic transmission. This chain is Protein bassoon, found in Rattus norvegicus (Rat).